The primary structure comprises 405 residues: CMP-sialic acid transporter 4 (405 aa).

At 1 to 43 (MQRNGVMECSVCHSKVVAPSPRSVSRAYDKHRSKISSKYRALN) the chain is on the cytoplasmic side. Residues 44-64 (FLLVSGDCILVGLQPILVFMS) form a helical membrane-spanning segment. The Lumenal portion of the chain corresponds to 65 to 74 (KVDGKFQFSP). Residues 75–95 (ISVNFLTEVTKVIFAIVMLII) form a helical membrane-spanning segment. The Cytoplasmic portion of the chain corresponds to 96-121 (QSRKQKVGEKPLLSLSTFVQAARNNA). Residues 122–142 (LLAVPALLYAINNYLKFIMQL) form a helical membrane-spanning segment. Residue Tyr-143 is a topological domain, lumenal. A helical transmembrane segment spans residues 144-164 (FSPATVKMLSNLKVLVIAILL). Residues 165-171 (KFIMRRK) lie on the Cytoplasmic side of the membrane. Residues 172-192 (FSIIQWEALALLLIGISVNQL) form a helical membrane-spanning segment. The Lumenal segment spans residues 193-203 (SSIPDGTKSFG). A helical transmembrane segment spans residues 204-224 (LAVTTIAYIYTLIFVTVPSLA). The Cytoplasmic portion of the chain corresponds to 225–244 (SVYNEYALKSQFDTSIYLQN). Residues 245–265 (LFLYGYGAIFNFLGILGTVIF) form a helical membrane-spanning segment. Residues 266–281 (QGPESFDILQGHSRAT) are Lumenal-facing. A helical membrane pass occupies residues 282–302 (MFLICNNAAQGILSSFFFKYA). At 303–322 (DTILKKYSSTVATIFTGLAS) the chain is on the cytoplasmic side. A helical membrane pass occupies residues 323–343 (AAFLGHTLTVNFLLGISIVFI). Topologically, residues 344–405 (SMHQFFSPLA…TDERKPLLPI (62 aa)) are lumenal. The tract at residues 386-405 (AADDASHLTSTDERKPLLPI) is disordered. Basic and acidic residues predominate over residues 389–405 (DASHLTSTDERKPLLPI).

This sequence belongs to the nucleotide-sugar transporter family. CMP-Sialate:CMP antiporter (TC 2.A.7.12) subfamily.

Its subcellular location is the golgi apparatus membrane. Functionally, sugar transporter involved in the transport of CMP-sialic acid from the cytoplasm into the Golgi. May transport important nucleotide sugars such as CMP-Kdo (2-keto-3-deoxy-D-manno-octulosonic acid) in physiological conditions. In Oryza sativa subsp. indica (Rice), this protein is CMP-sialic acid transporter 4.